Reading from the N-terminus, the 503-residue chain is Maturase K (503 aa).

It belongs to the intron maturase 2 family. MatK subfamily.

Its subcellular location is the plastid. The protein localises to the chloroplast. Functionally, usually encoded in the trnK tRNA gene intron. Probably assists in splicing its own and other chloroplast group II introns. This Liquidambar orientalis (Oriental sweet gum) protein is Maturase K.